Reading from the N-terminus, the 373-residue chain is uncharacterized protein (373 aa).

The CP-type G domain maps to 14–168 (KKIVNKIIDE…LMDTPGVLEM (155 aa)). Position 117–124 (117–124 (GYPNVGKS)) interacts with GTP.

It belongs to the TRAFAC class YlqF/YawG GTPase family.

This is an uncharacterized protein from Methanocaldococcus jannaschii (strain ATCC 43067 / DSM 2661 / JAL-1 / JCM 10045 / NBRC 100440) (Methanococcus jannaschii).